The following is a 96-amino-acid chain: MKIRPLHDRVVVRRLEEERTTAGWIVIPDSATEKPMRGEIIAIGAGKILDNGDVRAFVVKVGDVVLFGKYSGTEVKVAGQELVVMREDDIMGVIEK.

This sequence belongs to the GroES chaperonin family. Heptamer of 7 subunits arranged in a ring. Interacts with the chaperonin GroEL.

It is found in the cytoplasm. Functionally, together with the chaperonin GroEL, plays an essential role in assisting protein folding. The GroEL-GroES system forms a nano-cage that allows encapsulation of the non-native substrate proteins and provides a physical environment optimized to promote and accelerate protein folding. GroES binds to the apical surface of the GroEL ring, thereby capping the opening of the GroEL channel. The sequence is that of Co-chaperonin GroES from Legionella jeonii.